The primary structure comprises 221 residues: Ras-related protein RabS (221 aa).

GTP is bound at residue 16-23 (GDNQCGKS). An Effector region motif is present at residues 38–47 (GIQLWHGIEI). GTP contacts are provided by residues 71–75 (DGNGG) and 137–140 (NKCD). C218 is subject to Cysteine methyl ester. A lipid anchor (S-geranylgeranyl cysteine) is attached at C218. A propeptide spans 219 to 221 (IIN) (removed in mature form).

This sequence belongs to the small GTPase superfamily. Rab family.

It localises to the cell membrane. In Dictyostelium discoideum (Social amoeba), this protein is Ras-related protein RabS (rabS).